A 332-amino-acid polypeptide reads, in one-letter code: DGAT1/2-independent enzyme synthesizing storage lipids (332 aa).

Over 1–10 (MIGSNESSTE) the chain is Lumenal. N5 carries N-linked (GlcNAc...) asparagine glycosylation. The helical transmembrane segment at 11–31 (GPIPTSYLSFLAYLLGEWTGV) threads the bilayer. Topologically, residues 32-45 (EHTEDYLSYGAYLS) are cytoplasmic. Residues 46 to 66 (WVLFPLAIVFILPVAIFFFCF) form a helical membrane-spanning segment. Over 67–332 (NTSLLLLHIY…ERFQTRQKED (266 aa)) the chain is Lumenal. Residue H132 is part of the active site. N289 carries an N-linked (GlcNAc...) asparagine glycan.

The protein belongs to the diacylglycerol acyltransferase family. Highly divergent.

The protein localises to the endoplasmic reticulum membrane. The catalysed reaction is a 1,2-diacylglycerol + a 1,2-diacyl-sn-glycero-3-phosphocholine = a triacylglycerol + a 1-acyl-sn-glycero-3-phosphocholine. It carries out the reaction a 1-O-alkyl-2-acyl-sn-glycero-3-phosphocholine + a 1,2-diacylglycerol = a 1-O-alkyl-sn-glycero-3-phosphocholine + a triacylglycerol. The enzyme catalyses a 2-acylglycerol + an acyl-CoA = a 1,2-diacylglycerol + CoA. It catalyses the reaction an acyl-CoA + a 1,2-diacyl-sn-glycerol = a triacyl-sn-glycerol + CoA. The catalysed reaction is 2-(9Z-octadecenoyl)-glycerol + (9Z)-octadecenoyl-CoA = 1,2-di-(9Z-octadecenoyl)-glycerol + CoA. It carries out the reaction 1,2-di-(9Z-octadecenoyl)-sn-glycerol + (9Z)-octadecenoyl-CoA = 1,2,3-tri-(9Z-octadecenoyl)-glycerol + CoA. Its function is as follows. Catalytic subunit of the alternative triglyceride biosynthesis pathway, which mediates formation of triacylglycerol from diacylglycerol and membrane phospholipids. Synthesizes triacylglycerol at the expense of membrane phospholipids, such as phosphatidylcholine (PC) and its ether-linked form (ePC), thereby altering the composition of membranes. The alternative triglyceride biosynthesis pathway is probably required to provide the energy required for rapid growth when fuel sources are limiting. It maintains mitochondrial function during periods of extracellular lipid starvation. Can also use acyl-CoA as donor: acts as a acyl-CoA:monoacylglycerol acyltransferase (MGAT), but also shows acyl-CoA:diacylglycerol acyltransferase (DGAT) activity. The chain is DGAT1/2-independent enzyme synthesizing storage lipids (TMEM68) from Gallus gallus (Chicken).